The following is a 424-amino-acid chain: Glucan endo-1,3-alpha-glucosidase agn1 (424 aa).

Positions M1–A20 are cleaved as a signal peptide.

This sequence belongs to the glycosyl hydrolase 71 family. As to quaternary structure, monomer. In terms of processing, not glycosylated.

Its subcellular location is the secreted. The protein localises to the cell wall. It carries out the reaction Endohydrolysis of (1-&gt;3)-alpha-D-glucosidic linkages in isolichenin, pseudonigeran and nigeran.. In terms of biological role, has a role in cell separation where it is required for the degradation of the cell wall material surrounding the septum (the septum edging) which must be hydrolyzed before full separation of the daughter cells can occur. Hydrolyzes 1,3-alpha-glucan predominantly into pentasaccharides. The protein is Glucan endo-1,3-alpha-glucosidase agn1 (agn1) of Schizosaccharomyces pombe (strain 972 / ATCC 24843) (Fission yeast).